A 1734-amino-acid chain; its full sequence is Gag-pol polyprotein (1734 aa).

G2 carries the N-myristoyl glycine; by host lipid modification. The PTAP/PSAP motif signature appears at 109–112 (PTAP). Residues 112 to 217 (PILPSGPSTQ…STTSRAFPLR (106 aa)) are disordered. The LYPX(n)L motif motif lies at 128–132 (LYPAF). Residues 161-164 (PPPY) carry the PPXY motif motif. S191 is modified (phosphoserine; by host). Residues 344–392 (GRSPTNLAKVKGITQGPNESPSAFLERLKEAYRRYTPYDPEDPGQETNV) are interaction with host PIAS4. An interaction with host UBE2I region spans residues 429-434 (IFNKRE). Basic and acidic residues-rich tracts occupy residues 433–474 (RETP…REMS) and 485–498 (RQDR…RPQL). Disordered stretches follow at residues 433–498 (RETP…RPQL) and 512–551 (WAKD…EPRI). Residues 501-518 (DQCAYCKEKGHWAKDCPK) form a CCHC-type zinc finger. The Peptidase A2 domain occupies 560–630 (VTFLVDTGAQ…CPYPLLGRDL (71 aa)). The Protease; shared with dimeric partner role is filled by D565. A Reverse transcriptase domain is found at 740-931 (LDQGILVPCQ…KQVKYLGYLL (192 aa)). Residues D808, D882, D883, D1182, E1220, D1241, and D1311 each contribute to the Mg(2+) site. The RNase H type-1 domain occupies 1173 to 1319 (PDADHTWYTD…ADQAAREAAI (147 aa)). The segment at 1386–1426 (HRLTHLGYQKMKALLDRGESPYYMLNRDKTLQYVADSCTVC) adopts an HHCC-type zinc-finger fold. Residues 1443-1601 (RGHRPGTHWE…TPYEILYGAP (159 aa)) enclose the Integrase catalytic domain. Positions 1454 and 1513 each coordinate Mg(2+).

Homohexamer; further associates as homomultimer. The virus core is composed of a lattice formed from hexagonal rings, each containing six capsid monomers. Interacts with mouse UBE2I and mouse PIAS4. As to quaternary structure, interacts (via PPXY motif) with host NEDD4. Interacts (via PSAP motif) with host TSG101. Interacts (via LYPX(n)L motif) with host PDCD6IP. In terms of assembly, the reverse transcriptase is a monomer (Potential). Interacts (via RNase domains) with host release factor ETF1; this interaction is essential for translational readthrough of amber codon between viral gag and pol genes, as well as for viral replication. Homodimer. It depends on Mg(2+) as a cofactor. Post-translationally, ubiquitinated by ITCH. Gag can recruit the ubiquitin ligase Itch in an L domain-independent manner to facilitate virus release via a mechanism that involves Gag ubiquitination. Specific enzymatic cleavages by the viral protease yield mature proteins. The protease is released by autocatalytic cleavage. The polyprotein is cleaved during and after budding, this process is termed maturation. In terms of processing, sumoylated; which is required for virus replication. Post-translationally, phosphorylated on serine residues.

It is found in the virion. Its subcellular location is the host cell membrane. It localises to the host late endosome membrane. The protein resides in the host endosome. The protein localises to the host multivesicular body. It is found in the host cytoplasm. The catalysed reaction is DNA(n) + a 2'-deoxyribonucleoside 5'-triphosphate = DNA(n+1) + diphosphate. The enzyme catalyses Endonucleolytic cleavage to 5'-phosphomonoester.. Most efficiently inhibited by Amprenavir, which is able to block Gag-Pol processing in infected cells. Functionally, plays a role in budding and is processed by the viral protease during virion maturation outside the cell. During budding, it recruits, in a PPXY-dependent or independent manner, Nedd4-like ubiquitin ligases that conjugate ubiquitin molecules to Gag-Pol, or to Gag-Pol binding host factors. Interaction with HECT ubiquitin ligases probably links the viral protein to the host ESCRT pathway and facilitates release. Targets Gag and gag-pol polyproteins to the plasma membrane via a multipartite membrane binding signal, that includes its myristoylated N-terminus. Also mediates nuclear localization of the pre-integration complex. In terms of biological role, constituent of the pre-integration complex (PIC) which tethers the latter to mitotic chromosomes. This allows the integration of the viral genome into the host DNA. Its function is as follows. Forms the spherical core of the virion that encapsulates the genomic RNA-nucleocapsid complex. Functionally, involved in the packaging and encapsidation of two copies of the genome. Binds with high affinity to conserved UCUG elements within the packaging signal, located near the 5'-end of the genome. This binding is dependent on genome dimerization. Acts as a nucleic acid chaperone which is involved in rearrangement of nucleic acid secondary structures during gRNA retrotranscription. The aspartyl protease mediates proteolytic cleavages of Gag and Gag-Pol polyproteins during or shortly after the release of the virion from the plasma membrane. Cleavages take place as an ordered, step-wise cascade to yield mature proteins. This process is called maturation. Displays maximal activity during the budding process just prior to particle release from the cell (Potential). Cleaves the translation initiation factor eIF4G leading to the inhibition of host cap-dependent translation. In terms of biological role, RT is a multifunctional enzyme that converts the viral dimeric RNA genome into dsDNA in the cytoplasm, shortly after virus entry into the cell. This enzyme displays a DNA polymerase activity that can copy either DNA or RNA templates, and a ribonuclease H (RNase H) activity that cleaves the RNA strand of RNA-DNA heteroduplexes in a partially processive 3' to 5' endonucleasic mode. Conversion of viral genomic RNA into dsDNA requires many steps. A tRNA binds to the primer-binding site (PBS) situated at the 5' end of the viral RNA. RT uses the 3' end of the tRNA primer to perform a short round of RNA-dependent minus-strand DNA synthesis. The reading proceeds through the U5 region and ends after the repeated (R) region which is present at both ends of viral RNA. The portion of the RNA-DNA heteroduplex is digested by the RNase H, resulting in a ssDNA product attached to the tRNA primer. This ssDNA/tRNA hybridizes with the identical R region situated at the 3' end of viral RNA. This template exchange, known as minus-strand DNA strong stop transfer, can be either intra- or intermolecular. RT uses the 3' end of this newly synthesized short ssDNA to perform the RNA-dependent minus-strand DNA synthesis of the whole template. RNase H digests the RNA template except for a polypurine tract (PPT) situated at the 5' end of the genome. It is not clear if both polymerase and RNase H activities are simultaneous. RNase H probably can proceed both in a polymerase-dependent (RNA cut into small fragments by the same RT performing DNA synthesis) and a polymerase-independent mode (cleavage of remaining RNA fragments by free RTs). Secondly, RT performs DNA-directed plus-strand DNA synthesis using the PPT that has not been removed by RNase H as primers. PPT and tRNA primers are then removed by RNase H. The 3' and 5' ssDNA PBS regions hybridize to form a circular dsDNA intermediate. Strand displacement synthesis by RT to the PBS and PPT ends produces a blunt ended, linear dsDNA copy of the viral genome that includes long terminal repeats (LTRs) at both ends. Its function is as follows. Catalyzes viral DNA integration into the host chromosome, by performing a series of DNA cutting and joining reactions. This enzyme activity takes place after virion entry into a cell and reverse transcription of the RNA genome in dsDNA. The first step in the integration process is 3' processing. This step requires a complex comprising the viral genome, matrix protein and integrase. This complex is called the pre-integration complex (PIC). The integrase protein removes 2 nucleotides from each 3' end of the viral DNA, leaving recessed CA OH's at the 3' ends. In the second step that requires cell division, the PIC enters cell nucleus. In the third step, termed strand transfer, the integrase protein joins the previously processed 3' ends to the 5' ends of strands of target cellular DNA at the site of integration. The last step is viral DNA integration into host chromosome. The protein is Gag-pol polyprotein (gag-pol) of Mus musculus (Mouse).